The chain runs to 402 residues: MSKLVRPHGGGELKPLLLTGDALSAEKARAASLPQLKMSSRETGDLIMMGIGGFTPLDGFMTKSDWQGVCDGYKMTNGLFWPIPITLSTDDESIKDGDELALVDAETGEIMGTMKVTDKYTIDKAHECMQVYKTTDMEHPGVKMVMAQGKYNLAGPVKVLSTGNFKEEYGEQFMTPAETRAKFEQMGWSRVAAFQTRNPMHRSHEYLAKIAIETMDGVLVHSLLGALKPGDIPAEVRSEAIATLIDNYFAPNTVIQAGYPLDMRYAGPREALLHALFRQNYGCSHLIVGRDHAGVGDYYGPFDAQKIFDEIPKGSLETVNMNIDWTFWCKKCGGMASQRTCPHTKDDRILLSGTKVRAMLSEGQDLPVEFSRPEVAKVLQKYYAGLSAEQNVKVELKGHSAA.

The protein belongs to the sulfate adenylyltransferase family.

The enzyme catalyses sulfate + ATP + H(+) = adenosine 5'-phosphosulfate + diphosphate. It functions in the pathway sulfur metabolism; hydrogen sulfide biosynthesis; sulfite from sulfate: step 1/3. The chain is Sulfate adenylyltransferase from Thiobacillus denitrificans (strain ATCC 25259 / T1).